The chain runs to 325 residues: Peroxidase 1 (325 aa).

Residues 1 to 21 form the signal peptide; that stretch reads MAIKNILALVVLLSVVGVSVA. Cystine bridges form between Cys35–Cys113, Cys68–Cys73, Cys119–Cys321, and Cys198–Cys230. His66 serves as the catalytic Proton acceptor. Residues Asp67, Val70, Gly72, Asp74, and Ser76 each coordinate Ca(2+). Pro161 is a substrate binding site. Position 191 (His191) interacts with heme b. Thr192 contacts Ca(2+). An N-linked (GlcNAc...) asparagine glycan is attached at Asn207. Residues Asp242, Ser245, and Asp250 each contribute to the Ca(2+) site.

This sequence belongs to the peroxidase family. Classical plant (class III) peroxidase subfamily. Requires heme b as cofactor. It depends on Ca(2+) as a cofactor. Slightly expressed in roots.

The protein localises to the secreted. The enzyme catalyses 2 a phenolic donor + H2O2 = 2 a phenolic radical donor + 2 H2O. In terms of biological role, removal of H(2)O(2), oxidation of toxic reductants, biosynthesis and degradation of lignin, suberization, auxin catabolism, response to environmental stresses such as wounding, pathogen attack and oxidative stress. These functions might be dependent on each isozyme/isoform in each plant tissue. The chain is Peroxidase 1 (PER1) from Arabidopsis thaliana (Mouse-ear cress).